The following is a 128-amino-acid chain: Large ribosomal subunit protein eL8 (128 aa).

Belongs to the eukaryotic ribosomal protein eL8 family. Part of the 50S ribosomal subunit. Probably part of the RNase P complex.

The protein resides in the cytoplasm. Its function is as follows. Multifunctional RNA-binding protein that recognizes the K-turn motif in ribosomal RNA, the RNA component of RNase P, box H/ACA, box C/D and box C'/D' sRNAs. The chain is Large ribosomal subunit protein eL8 from Nitrosopumilus maritimus (strain SCM1).